The sequence spans 238 residues: Orotidine 5'-phosphate decarboxylase (238 aa).

Substrate contacts are provided by residues D11, K32, 59–68, T123, R185, Q194, G214, and R215; that span reads DLKFHDIPNT. K61 serves as the catalytic Proton donor.

It belongs to the OMP decarboxylase family. Type 1 subfamily. In terms of assembly, homodimer.

It carries out the reaction orotidine 5'-phosphate + H(+) = UMP + CO2. It participates in pyrimidine metabolism; UMP biosynthesis via de novo pathway; UMP from orotate: step 2/2. In terms of biological role, catalyzes the decarboxylation of orotidine 5'-monophosphate (OMP) to uridine 5'-monophosphate (UMP). The protein is Orotidine 5'-phosphate decarboxylase of Nostoc sp. (strain PCC 7120 / SAG 25.82 / UTEX 2576).